A 311-amino-acid polypeptide reads, in one-letter code: Methionyl-tRNA formyltransferase (311 aa).

112-115 (SLLP) contacts (6S)-5,6,7,8-tetrahydrofolate.

This sequence belongs to the Fmt family.

It catalyses the reaction L-methionyl-tRNA(fMet) + (6R)-10-formyltetrahydrofolate = N-formyl-L-methionyl-tRNA(fMet) + (6S)-5,6,7,8-tetrahydrofolate + H(+). Attaches a formyl group to the free amino group of methionyl-tRNA(fMet). The formyl group appears to play a dual role in the initiator identity of N-formylmethionyl-tRNA by promoting its recognition by IF2 and preventing the misappropriation of this tRNA by the elongation apparatus. This is Methionyl-tRNA formyltransferase from Rhizobium meliloti (strain 1021) (Ensifer meliloti).